A 531-amino-acid polypeptide reads, in one-letter code: MAMKNLLSLARRSQRRLFLTQATRSSSSFSAIDSVPASASPTALSPPPPHLMPYDHAAEIIKNKIKKLENPDKRFLKYASPHPILASHNHILSAPETRVTTLPNGLRVATESNLSAKTATVGVWIDAGSRFESDETNGTAHFLEHMIFKGTDRRTVRALEEEIEDIGGHLNAYTSREQTTYYAKVLDSNVNQALDVLADILQNSKFEEQRINRERDVILREMQEVEGQTDEVVLDHLHATAFQYTPLGRTILGPAQNVKSITREDLQNYIKTHYTASRMVIAAAGAVKHEEVVEQVKKLFTKLSSDPTTTSQLVANEPASFTGSEVRMIDDDLPLAQFAVAFEGASWTDPDSVALMVMQTMLGSWNKNVGGGKHVGSDLTQRVAINEIAESIMAFNTNYKDTGLFGVYAVAKADCLDDLSYAIMYEVTKLAYRVSDADVTRARNQLKSSLLLHMDGTSPIAEDIGRQLLTYGRRIPTAELFARIDAVDASTVKRVANKYIYDKDIAISAIGPIQDLPDYNKFRRRTYWNRY.

A mitochondrion-targeting transit peptide spans 1 to 78; it reads MAMKNLLSLA…ENPDKRFLKY (78 aa). Residues 30 to 50 form a disordered region; the sequence is SAIDSVPASASPTALSPPPPH. Histidine 141 lines the Zn(2+) pocket. Residue glutamate 144 is the Proton acceptor of the active site. Histidine 145 serves as a coordination point for Zn(2+). Residue glutamate 214 is part of the active site. Residue glutamate 221 coordinates Zn(2+).

Belongs to the peptidase M16 family. As to quaternary structure, heterodimer of an alpha subunit and a beta subunit subunits, forming the mitochondrial processing protease (MPP) in which the alpha subunit is involved in substrate recognition and binding and the beta subunit is the catalytic subunit. Component of the ubiquinol-cytochrome c oxidoreductase (cytochrome b-c1 complex, complex III, CIII), a multisubunit enzyme composed of 10 subunits. The complex is composed of 3 respiratory subunits cytochrome b (MT-CYB), cytochrome c1 (CYC1-1 or CYC1-2) and Rieske protein (UCR1-1 or UCR1-2), 2 core protein subunits MPPalpha1 (or MPPalpha2) and MPPB, and 5 low-molecular weight protein subunits QCR7-1 (or QCR7-2), UCRQ-1 (or UCRQ-2), QCR9, UCRY and probably QCR6-1 (or QCR6-2). The complex exists as an obligatory dimer and forms supercomplexes (SCs) in the inner mitochondrial membrane with NADH-ubiquinone oxidoreductase (complex I, CI), resulting in different assemblies (supercomplexes SCI(1)III(2) and SCI(2)III(4)). The cofactor is Zn(2+).

It is found in the mitochondrion. Its subcellular location is the mitochondrion inner membrane. It carries out the reaction Release of N-terminal transit peptides from precursor proteins imported into the mitochondrion, typically with Arg in position P2.. Its activity is regulated as follows. Binding to the alpha subunit is required for catalytic activity. Functionally, catalytic subunit of the essential mitochondrial processing protease (MPP), which cleaves the mitochondrial sequence off newly imported precursors proteins. Preferentially, cleaves after an arginine at position P2. In terms of biological role, component of the ubiquinol-cytochrome c oxidoreductase, a multisubunit transmembrane complex that is part of the mitochondrial electron transport chain which drives oxidative phosphorylation. The respiratory chain contains 3 multisubunit complexes succinate dehydrogenase (complex II, CII), ubiquinol-cytochrome c oxidoreductase (cytochrome b-c1 complex, complex III, CIII) and cytochrome c oxidase (complex IV, CIV), that cooperate to transfer electrons derived from NADH and succinate to molecular oxygen, creating an electrochemical gradient over the inner membrane that drives transmembrane transport and the ATP synthase. The cytochrome b-c1 complex catalyzes electron transfer from ubiquinol to cytochrome c, linking this redox reaction to translocation of protons across the mitochondrial inner membrane, with protons being carried across the membrane as hydrogens on the quinol. In the process called Q cycle, 2 protons are consumed from the matrix, 4 protons are released into the intermembrane space and 2 electrons are passed to cytochrome c. This Arabidopsis thaliana (Mouse-ear cress) protein is Probable mitochondrial-processing peptidase subunit beta, mitochondrial (MPPbeta).